The sequence spans 416 residues: Ribosome biogenesis protein WDR12 homolog (416 aa).

The tract at residues valine 7–glutamate 89 is ubiquitin-like (UBL) domain. 7 WD repeats span residues valine 101–valine 138, glycine 140–valine 184, glycine 189–aspartate 228, glycine 259–threonine 297, threonine 299–valine 338, serine 344–tyrosine 384, and glycine 388–tyrosine 416. The segment at glycine 226–lysine 245 is disordered.

The protein belongs to the WD repeat WDR12/YTM1 family.

The protein resides in the nucleus. It is found in the nucleolus. Its subcellular location is the nucleoplasm. Its function is as follows. Required for maturation of ribosomal RNAs and formation of the large ribosomal subunit. This is Ribosome biogenesis protein WDR12 homolog from Nematostella vectensis (Starlet sea anemone).